The chain runs to 77 residues: UPF0291 protein BLi02035/BL02933 (77 aa).

The tract at residues 57-77 is disordered; the sequence is PEGNDVTPEKLKQEKRNRRLH.

Belongs to the UPF0291 family.

The protein resides in the cytoplasm. The protein is UPF0291 protein BLi02035/BL02933 of Bacillus licheniformis (strain ATCC 14580 / DSM 13 / JCM 2505 / CCUG 7422 / NBRC 12200 / NCIMB 9375 / NCTC 10341 / NRRL NRS-1264 / Gibson 46).